We begin with the raw amino-acid sequence, 498 residues long: ATP synthase subunit beta, chloroplastic (498 aa).

An ATP-binding site is contributed by 172-179 (GGAGVGKT).

Belongs to the ATPase alpha/beta chains family. In terms of assembly, F-type ATPases have 2 components, CF(1) - the catalytic core - and CF(0) - the membrane proton channel. CF(1) has five subunits: alpha(3), beta(3), gamma(1), delta(1), epsilon(1). CF(0) has four main subunits: a(1), b(1), b'(1) and c(9-12).

It is found in the plastid. The protein localises to the chloroplast thylakoid membrane. It catalyses the reaction ATP + H2O + 4 H(+)(in) = ADP + phosphate + 5 H(+)(out). In terms of biological role, produces ATP from ADP in the presence of a proton gradient across the membrane. The catalytic sites are hosted primarily by the beta subunits. This is ATP synthase subunit beta, chloroplastic from Saccharum hybrid (Sugarcane).